The chain runs to 476 residues: Probable cytosol aminopeptidase (476 aa).

Mn(2+) contacts are provided by K242 and D247. The active site involves K254. 3 residues coordinate Mn(2+): D265, D324, and E326. The active site involves R328.

This sequence belongs to the peptidase M17 family. It depends on Mn(2+) as a cofactor.

It localises to the cytoplasm. It catalyses the reaction Release of an N-terminal amino acid, Xaa-|-Yaa-, in which Xaa is preferably Leu, but may be other amino acids including Pro although not Arg or Lys, and Yaa may be Pro. Amino acid amides and methyl esters are also readily hydrolyzed, but rates on arylamides are exceedingly low.. It carries out the reaction Release of an N-terminal amino acid, preferentially leucine, but not glutamic or aspartic acids.. Its function is as follows. Presumably involved in the processing and regular turnover of intracellular proteins. Catalyzes the removal of unsubstituted N-terminal amino acids from various peptides. The protein is Probable cytosol aminopeptidase of Treponema denticola (strain ATCC 35405 / DSM 14222 / CIP 103919 / JCM 8153 / KCTC 15104).